The sequence spans 522 residues: Protein nucleotidyltransferase YdiU (522 aa).

Positions 101, 103, 104, 123, 135, 136, 193, and 200 each coordinate ATP. The active-site Proton acceptor is aspartate 270. Mg(2+) contacts are provided by asparagine 271 and aspartate 280. Aspartate 280 is a binding site for ATP.

It belongs to the SELO family. Mg(2+) is required as a cofactor. Mn(2+) serves as cofactor.

The catalysed reaction is L-seryl-[protein] + ATP = 3-O-(5'-adenylyl)-L-seryl-[protein] + diphosphate. It catalyses the reaction L-threonyl-[protein] + ATP = 3-O-(5'-adenylyl)-L-threonyl-[protein] + diphosphate. The enzyme catalyses L-tyrosyl-[protein] + ATP = O-(5'-adenylyl)-L-tyrosyl-[protein] + diphosphate. It carries out the reaction L-histidyl-[protein] + UTP = N(tele)-(5'-uridylyl)-L-histidyl-[protein] + diphosphate. The catalysed reaction is L-seryl-[protein] + UTP = O-(5'-uridylyl)-L-seryl-[protein] + diphosphate. It catalyses the reaction L-tyrosyl-[protein] + UTP = O-(5'-uridylyl)-L-tyrosyl-[protein] + diphosphate. Its function is as follows. Nucleotidyltransferase involved in the post-translational modification of proteins. It can catalyze the addition of adenosine monophosphate (AMP) or uridine monophosphate (UMP) to a protein, resulting in modifications known as AMPylation and UMPylation. This Flavobacterium johnsoniae (strain ATCC 17061 / DSM 2064 / JCM 8514 / BCRC 14874 / CCUG 350202 / NBRC 14942 / NCIMB 11054 / UW101) (Cytophaga johnsonae) protein is Protein nucleotidyltransferase YdiU.